The following is a 208-amino-acid chain: Imidazole glycerol phosphate synthase subunit HisH (208 aa).

Positions 1–206 constitute a Glutamine amidotransferase type-1 domain; the sequence is MIVIIDYDTG…KEVTESCKSS (206 aa). Residue Cys79 is the Nucleophile of the active site. Active-site residues include His181 and Glu183.

In terms of assembly, heterodimer of HisH and HisF.

It is found in the cytoplasm. The catalysed reaction is 5-[(5-phospho-1-deoxy-D-ribulos-1-ylimino)methylamino]-1-(5-phospho-beta-D-ribosyl)imidazole-4-carboxamide + L-glutamine = D-erythro-1-(imidazol-4-yl)glycerol 3-phosphate + 5-amino-1-(5-phospho-beta-D-ribosyl)imidazole-4-carboxamide + L-glutamate + H(+). The enzyme catalyses L-glutamine + H2O = L-glutamate + NH4(+). Its pathway is amino-acid biosynthesis; L-histidine biosynthesis; L-histidine from 5-phospho-alpha-D-ribose 1-diphosphate: step 5/9. IGPS catalyzes the conversion of PRFAR and glutamine to IGP, AICAR and glutamate. The HisH subunit catalyzes the hydrolysis of glutamine to glutamate and ammonia as part of the synthesis of IGP and AICAR. The resulting ammonia molecule is channeled to the active site of HisF. The chain is Imidazole glycerol phosphate synthase subunit HisH from Listeria innocua serovar 6a (strain ATCC BAA-680 / CLIP 11262).